Here is a 122-residue protein sequence, read N- to C-terminus: Glycine cleavage system H protein (122 aa).

A Lipoyl-binding domain is found at 19-101 (TATIGITKHA…EGNSWLYKIK (83 aa)). Residue lysine 60 is modified to N6-lipoyllysine.

Belongs to the GcvH family. As to quaternary structure, the glycine cleavage system is composed of four proteins: P, T, L and H. (R)-lipoate is required as a cofactor.

The glycine cleavage system catalyzes the degradation of glycine. The H protein shuttles the methylamine group of glycine from the P protein to the T protein. This chain is Glycine cleavage system H protein, found in Dinoroseobacter shibae (strain DSM 16493 / NCIMB 14021 / DFL 12).